Consider the following 471-residue polypeptide: GTPase Der (471 aa).

EngA-type G domains lie at Pro3 to Ser168 and Val178 to Ala353. Residues Gly9 to Ser16, Asp56 to Ile60, Asn120 to Glu123, Gly184 to Ser191, Asp231 to Met235, and Asn296 to Asp299 each bind GTP. The region spanning Arg354–Glu438 is the KH-like domain.

It belongs to the TRAFAC class TrmE-Era-EngA-EngB-Septin-like GTPase superfamily. EngA (Der) GTPase family. In terms of assembly, associates with the 50S ribosomal subunit.

GTPase that plays an essential role in the late steps of ribosome biogenesis. The sequence is that of GTPase Der from Symbiobacterium thermophilum (strain DSM 24528 / JCM 14929 / IAM 14863 / T).